A 355-amino-acid chain; its full sequence is Uroporphyrinogen decarboxylase (355 aa).

Substrate-binding positions include 27 to 31 (RQAGR), aspartate 77, tyrosine 154, threonine 209, and histidine 327.

The protein belongs to the uroporphyrinogen decarboxylase family. In terms of assembly, homodimer.

It is found in the cytoplasm. The catalysed reaction is uroporphyrinogen III + 4 H(+) = coproporphyrinogen III + 4 CO2. It participates in porphyrin-containing compound metabolism; protoporphyrin-IX biosynthesis; coproporphyrinogen-III from 5-aminolevulinate: step 4/4. Functionally, catalyzes the decarboxylation of four acetate groups of uroporphyrinogen-III to yield coproporphyrinogen-III. This chain is Uroporphyrinogen decarboxylase, found in Aeromonas salmonicida (strain A449).